The following is a 289-amino-acid chain: uncharacterized protein (289 aa).

Residues 25-66 (GGSGDSQSAHTPSTSIHTQNNSTPNKNTSTPPVNVSNANNLE) are disordered. Residues 33 to 43 (AHTPSTSIHTQ) show a composition bias toward polar residues. Over residues 44 to 59 (NNSTPNKNTSTPPVNV) the composition is skewed to low complexity.

This is an uncharacterized protein from Haemophilus influenzae (strain ATCC 51907 / DSM 11121 / KW20 / Rd).